A 183-amino-acid polypeptide reads, in one-letter code: Photosystem I assembly protein Ycf4 (183 aa).

2 helical membrane-spanning segments follow: residues 21–43 (YWWASVLLLGGSSFLVVGLSSRL) and 58–80 (FIPQGLVMCFYGLVGLVVSTYLW).

Belongs to the Ycf4 family.

The protein localises to the plastid. Its subcellular location is the chloroplast thylakoid membrane. In terms of biological role, seems to be required for the assembly of the photosystem I complex. The protein is Photosystem I assembly protein Ycf4 of Nephroselmis olivacea (Green alga).